Here is a 121-residue protein sequence, read N- to C-terminus: Fluoride-specific ion channel FluC (121 aa).

The next 4 membrane-spanning stretches (helical) occupy residues 5-25 (LLIFLGGGTGSVLRYLLTISI), 33-53 (FPWGTFAVNILGCILIGVFYT), 66-83 (LMLTIGLCGGFTTFSTFS), and 98-118 (FFTYIIGSVVLGILGVMLGIW). Residues G74 and T77 each coordinate Na(+).

It belongs to the fluoride channel Fluc/FEX (TC 1.A.43) family.

The protein resides in the cell inner membrane. The enzyme catalyses fluoride(in) = fluoride(out). With respect to regulation, na(+) is not transported, but it plays an essential structural role and its presence is essential for fluoride channel function. Functionally, fluoride-specific ion channel. Important for reducing fluoride concentration in the cell, thus reducing its toxicity. This is Fluoride-specific ion channel FluC from Phocaeicola vulgatus (strain ATCC 8482 / DSM 1447 / JCM 5826 / CCUG 4940 / NBRC 14291 / NCTC 11154) (Bacteroides vulgatus).